Consider the following 327-residue polypeptide: Mitochondrial thiamine pyrophosphate carrier 1 (327 aa).

3 Solcar repeats span residues 13 to 114 (GSKL…AAQL), 126 to 214 (PAAA…LRAP), and 222 to 317 (FWGG…VLRA). Helical transmembrane passes span 16 to 36 (LQVV…IAPL), 95 to 111 (LLYI…YRSA), 132 to 152 (FVAG…LDLL), 189 to 209 (GIGP…AAYE), 223 to 245 (WGGQ…VFPL), and 292 to 309 (GLTV…VTMW).

This sequence belongs to the mitochondrial carrier (TC 2.A.29) family.

It localises to the mitochondrion inner membrane. In terms of biological role, mitochondrial transporter that mediates uptake of thiamine pyrophosphate (ThPP) into mitochondria. This is Mitochondrial thiamine pyrophosphate carrier 1 (TPC1) from Pyricularia oryzae (strain 70-15 / ATCC MYA-4617 / FGSC 8958) (Rice blast fungus).